The chain runs to 138 residues: Putative pre-16S rRNA nuclease (138 aa).

It belongs to the YqgF nuclease family.

The protein localises to the cytoplasm. In terms of biological role, could be a nuclease involved in processing of the 5'-end of pre-16S rRNA. This is Putative pre-16S rRNA nuclease from Azobacteroides pseudotrichonymphae genomovar. CFP2.